The following is a 955-amino-acid chain: Glycine dehydrogenase (decarboxylating) (955 aa).

Lysine 705 is subject to N6-(pyridoxal phosphate)lysine.

This sequence belongs to the GcvP family. The glycine cleavage system is composed of four proteins: P, T, L and H. The cofactor is pyridoxal 5'-phosphate.

The catalysed reaction is N(6)-[(R)-lipoyl]-L-lysyl-[glycine-cleavage complex H protein] + glycine + H(+) = N(6)-[(R)-S(8)-aminomethyldihydrolipoyl]-L-lysyl-[glycine-cleavage complex H protein] + CO2. Functionally, the glycine cleavage system catalyzes the degradation of glycine. The P protein binds the alpha-amino group of glycine through its pyridoxal phosphate cofactor; CO(2) is released and the remaining methylamine moiety is then transferred to the lipoamide cofactor of the H protein. In Aliivibrio fischeri (strain MJ11) (Vibrio fischeri), this protein is Glycine dehydrogenase (decarboxylating).